The sequence spans 140 residues: Sec-independent protein translocase protein TatB (140 aa).

The helical transmembrane segment at 2-22 threads the bilayer; the sequence is LPGIGFSELLLIGLAALIIIG. A disordered region spans residues 90–140; that stretch reads VNSAVMREHPVSPPPPATPPAPPAELPPEAAPHADSQNAPPEADPAKGDRT. Positions 100-119 are enriched in pro residues; sequence VSPPPPATPPAPPAELPPEA.

This sequence belongs to the TatB family. The Tat system comprises two distinct complexes: a TatABC complex, containing multiple copies of TatA, TatB and TatC subunits, and a separate TatA complex, containing only TatA subunits. Substrates initially bind to the TatABC complex, which probably triggers association of the separate TatA complex to form the active translocon.

It localises to the cell inner membrane. Functionally, part of the twin-arginine translocation (Tat) system that transports large folded proteins containing a characteristic twin-arginine motif in their signal peptide across membranes. Together with TatC, TatB is part of a receptor directly interacting with Tat signal peptides. TatB may form an oligomeric binding site that transiently accommodates folded Tat precursor proteins before their translocation. The polypeptide is Sec-independent protein translocase protein TatB (Hyphomonas neptunium (strain ATCC 15444)).